Here is a 223-residue protein sequence, read N- to C-terminus: ATP-dependent dethiobiotin synthetase BioD (223 aa).

Threonine 16 lines the Mg(2+) pocket. Lysine 37 is an active-site residue. Serine 41 contacts substrate. Mg(2+) contacts are provided by aspartate 50 and glutamate 111. ATP contacts are provided by residues aspartate 50, 111–114, and 171–172; these read EGAG and NR.

The protein belongs to the dethiobiotin synthetase family. Homodimer. It depends on Mg(2+) as a cofactor.

The protein localises to the cytoplasm. The catalysed reaction is (7R,8S)-7,8-diammoniononanoate + CO2 + ATP = (4R,5S)-dethiobiotin + ADP + phosphate + 3 H(+). It participates in cofactor biosynthesis; biotin biosynthesis; biotin from 7,8-diaminononanoate: step 1/2. Functionally, catalyzes a mechanistically unusual reaction, the ATP-dependent insertion of CO2 between the N7 and N8 nitrogen atoms of 7,8-diaminopelargonic acid (DAPA, also called 7,8-diammoniononanoate) to form a ureido ring. This chain is ATP-dependent dethiobiotin synthetase BioD, found in Anaeromyxobacter sp. (strain K).